Reading from the N-terminus, the 285-residue chain is Tryptophan synthase alpha chain (285 aa).

Catalysis depends on proton acceptor residues glutamate 53 and aspartate 64.

This sequence belongs to the TrpA family. In terms of assembly, tetramer of two alpha and two beta chains.

The enzyme catalyses (1S,2R)-1-C-(indol-3-yl)glycerol 3-phosphate + L-serine = D-glyceraldehyde 3-phosphate + L-tryptophan + H2O. It participates in amino-acid biosynthesis; L-tryptophan biosynthesis; L-tryptophan from chorismate: step 5/5. Its function is as follows. The alpha subunit is responsible for the aldol cleavage of indoleglycerol phosphate to indole and glyceraldehyde 3-phosphate. The sequence is that of Tryptophan synthase alpha chain from Bordetella pertussis (strain Tohama I / ATCC BAA-589 / NCTC 13251).